We begin with the raw amino-acid sequence, 1049 residues long: RIMS-binding protein 2 (1049 aa).

In terms of domain architecture, SH3 1 spans 164–231; that stretch reads GKVHLCVARY…PSNFVDFIQD (68 aa). 3 Fibronectin type-III domains span residues 294–387, 390–471, and 486–587; these read VPYP…GKDV, APSQ…EKDE, and PPQD…VPPA. Disordered regions lie at residues 580–664, 694–714, and 728–750; these read PDLL…VSTT, SAGP…EVKR, and LGQQ…GSDL. Positions 582–598 are enriched in pro residues; it reads LLVPPAPHPRTAPPPKP. The span at 603 to 616 shows a compositional bias: basic and acidic residues; the sequence is MDTKDLGPHVKVDE. Residues 641-651 show a composition bias toward low complexity; that stretch reads GPGRRSPSPSR. Phosphoserine is present on residues serine 701 and serine 709. A compositionally biased stretch (basic and acidic residues) spans 735–746; the sequence is CHGDEYHTESSR. Residues serine 832 and serine 839 each carry the phosphoserine modification. At threonine 841 the chain carries Phosphothreonine. SH3 domains follow at residues 848–916 and 952–1019; these read LPAR…EIHA and VPTR…EVPD. The segment at 1024–1049 is disordered; sequence HLSDAPPHYSHDPPMRTKAKRVSQPP. The span at 1040–1049 shows a compositional bias: basic residues; it reads TKAKRVSQPP.

It belongs to the RIMBP family. In terms of assembly, interacts with CACNA1D and CACNA1B, and potentially with other Ca(2+) channel alpha-1 isoforms. Interacts with RIMS1 and RIMS2.

It is found in the cell membrane. Its subcellular location is the synapse. Functionally, plays a role in the synaptic transmission as bifunctional linker that interacts simultaneously with RIMS1, RIMS2, CACNA1D and CACNA1B. This is RIMS-binding protein 2 (Rimbp2) from Rattus norvegicus (Rat).